A 55-amino-acid chain; its full sequence is Accessory gland-specific peptide 70A (55 aa).

Positions 1-19 (MKTLSVFLVLVCLLGLVQS) are cleaved as a signal peptide. Pro28, Pro32, Pro34, and Pro38 each carry hydroxyproline. Cys43 and Cys55 form a disulfide bridge.

In terms of tissue distribution, main cells of the accessory glands of males (paragonial gland).

It is found in the secreted. In terms of biological role, represses female sexual receptivity and stimulates oviposition. This chain is Accessory gland-specific peptide 70A (Acp70A), found in Drosophila sechellia (Fruit fly).